The chain runs to 511 residues: MEEIQRYLQLERSQQHDFLYPLIFQEYIYAFAHDPGFSRSILSENPGYDNKSSLLIVKRLITRMYQQNHFIISPNDSNQNPFWARNKNLYSQIISEGFAFIVEIPFSLRLISCLEGKKKKIVKYQNLRSIHSIFPFLEDNLSHFNFVLDILIPHPVHVEILVQTLRYWVKDASSLHLLRFFLNEYYNWNSLITPKKASSSFSKRNQRLFLFLYNSHVCEYESIFVFLRNQSSHLRSTFSGILFERIYFYGKIERLVNVFVKVKDFQANLWLVKEPCMHYIRYQRKSILASKGTSFFMNKWKCYLVTFWQWHFSLWFHPRRIYINQLSNHSLEFLGYLSSVRMNPSVVRSQILENSFLINNAIKKVDTLVPIIPLIASLAKAKFCNVLGHPISKPVRADLSDSNIIDRFGRIYRNLSHYHSGSSKKKSLYRIKYILRLSCARTLARKHKSTVRTFLKRLGSELLEEFLMSEEDVLFLTFPKASSTLQGVYRSRIWYLDIISINDLANHKSKF.

The protein belongs to the intron maturase 2 family. MatK subfamily.

It is found in the plastid. It localises to the chloroplast. In terms of biological role, usually encoded in the trnK tRNA gene intron. Probably assists in splicing its own and other chloroplast group II introns. This Paulownia tomentosa (Princess tree) protein is Maturase K.